A 916-amino-acid chain; its full sequence is Protein translocase subunit SecA (916 aa).

Residues Gln-87, 105–109 (GEGKT), and Asp-507 each bind ATP. Positions 900, 902, 911, and 912 each coordinate Zn(2+).

Belongs to the SecA family. In terms of assembly, monomer and homodimer. Part of the essential Sec protein translocation apparatus which comprises SecA, SecYEG and auxiliary proteins SecDF-YajC and YidC. It depends on Zn(2+) as a cofactor.

It localises to the cell inner membrane. Its subcellular location is the cytoplasm. The catalysed reaction is ATP + H2O + cellular proteinSide 1 = ADP + phosphate + cellular proteinSide 2.. In terms of biological role, part of the Sec protein translocase complex. Interacts with the SecYEG preprotein conducting channel. Has a central role in coupling the hydrolysis of ATP to the transfer of proteins into and across the cell membrane, serving both as a receptor for the preprotein-SecB complex and as an ATP-driven molecular motor driving the stepwise translocation of polypeptide chains across the membrane. This chain is Protein translocase subunit SecA, found in Neisseria gonorrhoeae (strain ATCC 700825 / FA 1090).